A 225-amino-acid chain; its full sequence is Uracil-DNA glycosylase (225 aa).

The active-site Proton acceptor is Asp65.

The protein belongs to the uracil-DNA glycosylase (UDG) superfamily. UNG family.

It is found in the cytoplasm. It catalyses the reaction Hydrolyzes single-stranded DNA or mismatched double-stranded DNA and polynucleotides, releasing free uracil.. Its function is as follows. Excises uracil residues from the DNA which can arise as a result of misincorporation of dUMP residues by DNA polymerase or due to deamination of cytosine. In Bacillus licheniformis (strain ATCC 14580 / DSM 13 / JCM 2505 / CCUG 7422 / NBRC 12200 / NCIMB 9375 / NCTC 10341 / NRRL NRS-1264 / Gibson 46), this protein is Uracil-DNA glycosylase.